We begin with the raw amino-acid sequence, 512 residues long: tRNA modification GTPase gtpbp3, mitochondrial (512 aa).

The TrmE-type G domain occupies 246-434 (GANIAIVGPP…LLNLLKLNLK (189 aa)). GTP contacts are provided by residues 253–260 (GPPNAGKS), 300–304 (DTAGL), and 375–378 (NKSD).

Belongs to the TRAFAC class TrmE-Era-EngA-EngB-Septin-like GTPase superfamily. TrmE GTPase family.

Its subcellular location is the mitochondrion. Its function is as follows. GTPase involved in the 5-carboxymethylaminomethyl modification (mnm(5)s(2)U34) of the wobble uridine base in mitochondrial tRNAs. The polypeptide is tRNA modification GTPase gtpbp3, mitochondrial (gtpbp3) (Dictyostelium discoideum (Social amoeba)).